The sequence spans 209 residues: Small ribosomal subunit protein uS5 (209 aa).

The segment covering 1–11 (MTQPNTQTTPN) has biased composition (polar residues). The segment at 1–55 (MTQPNTQTTPNDVPAAAEGQQEQQQQQRRGGGRERRGGGRRGDRRGQERDSEWQE) is disordered. The span at 18–28 (EGQQEQQQQQR) shows a compositional bias: low complexity. Positions 31–55 (GGRERRGGGRRGDRRGQERDSEWQE) are enriched in basic and acidic residues. Positions 53–116 (WQERVVQIRR…ADGKKHLVKV (64 aa)) constitute an S5 DRBM domain.

Belongs to the universal ribosomal protein uS5 family. As to quaternary structure, part of the 30S ribosomal subunit. Contacts proteins S4 and S8.

Functionally, with S4 and S12 plays an important role in translational accuracy. Its function is as follows. Located at the back of the 30S subunit body where it stabilizes the conformation of the head with respect to the body. This Prochlorococcus marinus (strain MIT 9313) protein is Small ribosomal subunit protein uS5.